The following is a 328-amino-acid chain: uncharacterized protein (328 aa).

Ser-170 carries the post-translational modification Phosphoserine.

It is found in the cytoplasm. It localises to the nucleus. This is an uncharacterized protein from Schizosaccharomyces pombe (strain 972 / ATCC 24843) (Fission yeast).